Here is a 79-residue protein sequence, read N- to C-terminus: U-actitoxin-Avd9d (79 aa).

An N-terminal signal peptide occupies residues 1–19 (NLKVLAVFVLCAILVVVTA). The propeptide occupies 20 to 37 (ERRGTETGGYKKDTLEDL). The 36-residue stretch at 44 to 79 (CFDSFKEATCHMAKTNRLCKTSAKYQINCKKTCGLC) folds into the ShKT domain. Intrachain disulfides connect Cys-44–Cys-79, Cys-53–Cys-72, and Cys-62–Cys-76. Residues 67–68 (KY) are crucial for binding to potassium channels.

This sequence belongs to the sea anemone type 1 potassium channel toxin family. Type 1b subfamily.

The protein resides in the secreted. It is found in the nematocyst. Functionally, inhibits voltage-gated potassium channels (Kv1/KCNA). The chain is U-actitoxin-Avd9d from Anemonia viridis (Snakelocks anemone).